The chain runs to 197 residues: UPF0725 protein At5g41640 (197 aa).

It belongs to the UPF0725 (EMB2204) family.

In Arabidopsis thaliana (Mouse-ear cress), this protein is UPF0725 protein At5g41640.